Here is a 453-residue protein sequence, read N- to C-terminus: Autophagy-related protein 21 (453 aa).

A WD 1 repeat occupies 4 to 137 (LRFNQDASCC…NDQIFIYDIS (134 aa)). Positions 177–207 (GNELDRIRSKSNNNNDQTNSDNGRSRTYSIN) are disordered. A compositionally biased stretch (low complexity) spans 187 to 198 (SNNNNDQTNSDN). WD repeat units lie at residues 252–347 (NLKP…RTDD) and 419–453 (FDNKIYVASDDGSFKTYTIPSKHGQCVLNKTSHFI). The L/FRRG motif signature appears at 310–314 (FRRGS).

The protein belongs to the WD repeat PROPPIN family.

The protein resides in the cytoplasm. It localises to the membrane. The protein localises to the vacuole membrane. Required for cytoplasm to vacuole transport (Cvt) vesicles formation and mitophagy. Involved in binding of phosphatidylethanolamine to ATG8 and in recruitment of ATG8 and ATG5 to the pre-autophagosomal structure. Protects ATG8 from ARG4-mediated cleavage. The protein is Autophagy-related protein 21 (ATG21) of Candida glabrata (strain ATCC 2001 / BCRC 20586 / JCM 3761 / NBRC 0622 / NRRL Y-65 / CBS 138) (Yeast).